We begin with the raw amino-acid sequence, 227 residues long: MTNNLSGYRNKFVRVKTSRKRTVSSNNWLRRQLNDPYVAKARTQGFRSRAAYKLLEIHEKFKLFTPNMKIVDLGAAPGGWSQIASKLIKASDNSLNNKIISIDLLEIRPIVGVEFFQKDFFEEDTEKLIIQALDGKANIVMSDMASNTIGHKATDHIRTLLLCEQALEFALKVLKPSGHFIAKIFRGGAENKLLNKVKHEFRTVKHFKPLSSRSESTEIYLVALNKK.

Positions 78, 80, 103, 119, and 143 each coordinate S-adenosyl-L-methionine. K183 functions as the Proton acceptor in the catalytic mechanism.

The protein belongs to the class I-like SAM-binding methyltransferase superfamily. RNA methyltransferase RlmE family.

Its subcellular location is the cytoplasm. The enzyme catalyses uridine(2552) in 23S rRNA + S-adenosyl-L-methionine = 2'-O-methyluridine(2552) in 23S rRNA + S-adenosyl-L-homocysteine + H(+). Functionally, specifically methylates the uridine in position 2552 of 23S rRNA at the 2'-O position of the ribose in the fully assembled 50S ribosomal subunit. This is Ribosomal RNA large subunit methyltransferase E from Rickettsia canadensis (strain McKiel).